Here is a 360-residue protein sequence, read N- to C-terminus: MKNIFLHSLNLENYRNFKNLELKIDNIPIILTGENGSGKTNILEAISLFYPGRGLRSSKLTDICKTSEDYCRVKALLQSKLGIADFSTHIKRNSNRRITEYNASKIANNELSKFTSMVWLTPQMEGIFTSSSTDRRKFLDRIVYNFDTKHAELLNKYEYYMHERNKILAEDIRDNNWLKIIEENMANISNIIANNRLKTIRFMQQAIDEIENEFPKADLSIDGIIEQKILNVEEDIVSFIITELYQTRSKDKLLGRTSFGIHKSDFLVKHQKKNILAKFCSTGEQKAILIAIILAEMNSTIKLTKITPILLLDEIFVHLDDKRRQYLMDFFTALNIQLWVTATNLDGIENFANKAQLIKL.

33–40 (GENGSGKT) is a binding site for ATP.

The protein belongs to the RecF family.

It is found in the cytoplasm. Functionally, the RecF protein is involved in DNA metabolism; it is required for DNA replication and normal SOS inducibility. RecF binds preferentially to single-stranded, linear DNA. It also seems to bind ATP. This chain is DNA replication and repair protein RecF, found in Rickettsia typhi (strain ATCC VR-144 / Wilmington).